A 223-amino-acid chain; its full sequence is Ras-related protein Rab-37 (223 aa).

A disordered region spans residues 1 to 23; that stretch reads MTGTPGAVATRDGEAPERSPPCS. Thr-2 is modified (N-acetylthreonine). 8 residues coordinate GTP: Thr-38, Gly-39, Val-40, Gly-41, Lys-42, Thr-43, Cys-44, and Thr-62. Thr-43 serves as a coordination point for Mg(2+). 2 short sequence motifs (switch) span residues 52-67 and 85-102; these read GAFL…GIDF and DTAG…YYRD. Thr-62 and Asp-85 together coordinate Mg(2+). Positions 88, 143, 144, 146, 147, 173, 174, and 175 each coordinate GTP. 2 S-geranylgeranyl cysteine lipidation sites follow: Cys-219 and Cys-220. Cys-220 carries the post-translational modification Cysteine methyl ester. A propeptide spans 221 to 223 (removed in mature form); that stretch reads SFM.

This sequence belongs to the small GTPase superfamily. Rab family. Interacts with RIMS1. Interacts (in GDP-bound form) with RPGR, RPGR functions as guanine exchange factor (GEF). Mg(2+) is required as a cofactor.

Its subcellular location is the cytoplasmic vesicle. The protein localises to the cell projection. It localises to the cilium. The catalysed reaction is GTP + H2O = GDP + phosphate + H(+). Its activity is regulated as follows. Regulated by guanine nucleotide exchange factors (GEFs) including RPGR which promote the exchange of bound GDP for free GTP. Regulated by GTPase activating proteins (GAPs) which increase the GTP hydrolysis activity. Inhibited by GDP dissociation inhibitors (GDIs). In terms of biological role, the small GTPases Rab are key regulators of intracellular membrane trafficking, from the formation of transport vesicles to their fusion with membranes. Rabs cycle between an inactive GDP-bound form and an active GTP-bound form that is able to recruit to membranes different sets of downstream effectors directly responsible for vesicle formation, movement, tethering and fusion. Acts as an organizer for autophagosome biogenesis in a GTP-dependent manner. Involved in retinal homeostasis by autophagy regulation. The sequence is that of Ras-related protein Rab-37 from Homo sapiens (Human).